The chain runs to 425 residues: ADP-ribose glycohydrolase MACROD2 (425 aa).

Residues 59-240 enclose the Macro domain; that stretch reads QETSQVKKSL…IYKKKMNEFF (182 aa). Substrate-binding positions include 77 to 79, 90 to 92, and 97 to 102; these read GDI, AAN, and GGGGVD. K170 is covalently cross-linked (Glycyl lysine isopeptide (Lys-Gly) (interchain with G-Cter in ubiquitin)). Residues 185–191 and F224 each bind substrate; that span reads ISTGIYG. The interval 243–425 is disordered; it reads DDNNEEEEDV…EAKEQRNGTK (183 aa). Residues 244–262 show a composition bias toward acidic residues; the sequence is DNNEEEEDVEMKEDSDENG. Basic and acidic residues predominate over residues 302-343; the sequence is EDFAKDENITKGGEVTDHSVRDQDHPDGQENDSTKNEIKIET. A compositionally biased stretch (polar residues) spans 344–360; that stretch reads ESQSSYMETEELSSNQE. Composition is skewed to basic and acidic residues over residues 381–391 and 415–425; these read EGEKAPGEDTP and DEAKEQRNGTK.

It belongs to the MacroD-type family. MacroD1/2-like subfamily. In terms of assembly, interacts with ADP-ribosylated PARP1.

Its subcellular location is the nucleus. It catalyses the reaction 2''-O-acetyl-ADP-D-ribose + H2O = ADP-D-ribose + acetate + H(+). The enzyme catalyses 4-O-(ADP-D-ribosyl)-L-aspartyl-[protein] + H2O = L-aspartyl-[protein] + ADP-D-ribose + H(+). The catalysed reaction is 5-O-(ADP-D-ribosyl)-L-glutamyl-[protein] + H2O = L-glutamyl-[protein] + ADP-D-ribose + H(+). It carries out the reaction alpha-NAD(+) + H2O = ADP-D-ribose + nicotinamide + H(+). Its activity is regulated as follows. Subject to product inhibition by ADP-ribose. Functionally, removes ADP-ribose from aspartate and glutamate residues in proteins bearing a single ADP-ribose moiety. Inactive towards proteins bearing poly-ADP-ribose. Deacetylates O-acetyl-ADP ribose, a signaling molecule generated by the deacetylation of acetylated lysine residues in histones and other proteins. In Homo sapiens (Human), this protein is ADP-ribose glycohydrolase MACROD2.